Consider the following 90-residue polypeptide: MMTRVFFAMFFLMALTEGWPRLYDSDCVRGRNMHITCFKDQTCGLTVKRNGRLNCSLTCSCRRGESCLHGEYIDWDSRGLKVHICPKPWF.

The first 18 residues, methionine 1–glycine 18, serve as a signal peptide directing secretion. A propeptide spanning residues tryptophan 19–arginine 49 is cleaved from the precursor. 6'-bromotryptophan is present on tryptophan 75.

Belongs to the E superfamily. Post-translationally, contains 4 disulfide bonds. As to expression, expressed by the venom duct.

The protein localises to the secreted. The sequence is that of Conotoxin Mr22.1 from Conus marmoreus (Marble cone).